The chain runs to 316 residues: 4-hydroxy-3-methylbut-2-enyl diphosphate reductase (316 aa).

Cys12 contributes to the [4Fe-4S] cluster binding site. Residues His43 and His81 each contribute to the (2E)-4-hydroxy-3-methylbut-2-enyl diphosphate site. Residues His43 and His81 each coordinate dimethylallyl diphosphate. Residues His43 and His81 each contribute to the isopentenyl diphosphate site. Cys103 is a binding site for [4Fe-4S] cluster. His131 lines the (2E)-4-hydroxy-3-methylbut-2-enyl diphosphate pocket. Residue His131 participates in dimethylallyl diphosphate binding. His131 contributes to the isopentenyl diphosphate binding site. The Proton donor role is filled by Glu133. (2E)-4-hydroxy-3-methylbut-2-enyl diphosphate is bound at residue Thr170. A [4Fe-4S] cluster-binding site is contributed by Cys198. (2E)-4-hydroxy-3-methylbut-2-enyl diphosphate contacts are provided by Ser226, Asn228, and Ser271. Dimethylallyl diphosphate is bound by residues Ser226, Asn228, and Ser271. Residues Ser226, Asn228, and Ser271 each contribute to the isopentenyl diphosphate site.

Belongs to the IspH family. The cofactor is [4Fe-4S] cluster.

The enzyme catalyses isopentenyl diphosphate + 2 oxidized [2Fe-2S]-[ferredoxin] + H2O = (2E)-4-hydroxy-3-methylbut-2-enyl diphosphate + 2 reduced [2Fe-2S]-[ferredoxin] + 2 H(+). It catalyses the reaction dimethylallyl diphosphate + 2 oxidized [2Fe-2S]-[ferredoxin] + H2O = (2E)-4-hydroxy-3-methylbut-2-enyl diphosphate + 2 reduced [2Fe-2S]-[ferredoxin] + 2 H(+). It functions in the pathway isoprenoid biosynthesis; dimethylallyl diphosphate biosynthesis; dimethylallyl diphosphate from (2E)-4-hydroxy-3-methylbutenyl diphosphate: step 1/1. The protein operates within isoprenoid biosynthesis; isopentenyl diphosphate biosynthesis via DXP pathway; isopentenyl diphosphate from 1-deoxy-D-xylulose 5-phosphate: step 6/6. Its function is as follows. Catalyzes the conversion of 1-hydroxy-2-methyl-2-(E)-butenyl 4-diphosphate (HMBPP) into a mixture of isopentenyl diphosphate (IPP) and dimethylallyl diphosphate (DMAPP). Acts in the terminal step of the DOXP/MEP pathway for isoprenoid precursor biosynthesis. The protein is 4-hydroxy-3-methylbut-2-enyl diphosphate reductase of Bacillus anthracis (strain A0248).